The following is a 119-amino-acid chain: Membrane-anchored ubiquitin-fold protein 1 (119 aa).

Positions 9–75 (FEIKFRLPDG…LENNKTLSEC (67 aa)) constitute a Ubiquitin-like domain. Residue C116 is modified to Cysteine methyl ester. Residue C116 is the site of S-farnesyl cysteine attachment. Positions 117 to 119 (SIM) are cleaved as a propeptide — removed in mature form.

The protein resides in the cell membrane. Functionally, may serve as docking site to facilitate the association of other proteins to the plasma membrane. The chain is Membrane-anchored ubiquitin-fold protein 1 (MUB1) from Oryza sativa subsp. japonica (Rice).